The following is a 129-amino-acid chain: Glycine cleavage system H protein (129 aa).

Residues 24-106 (SYTVGITEHA…YGEGWFFRVM (83 aa)) form the Lipoyl-binding domain. Position 65 is an N6-lipoyllysine (lysine 65).

Belongs to the GcvH family. The glycine cleavage system is composed of four proteins: P, T, L and H. (R)-lipoate is required as a cofactor.

In terms of biological role, the glycine cleavage system catalyzes the degradation of glycine. The H protein shuttles the methylamine group of glycine from the P protein to the T protein. The protein is Glycine cleavage system H protein of Shewanella putrefaciens (strain CN-32 / ATCC BAA-453).